Here is a 247-residue protein sequence, read N- to C-terminus: 5-oxoprolinase subunit A 1 (247 aa).

The protein belongs to the LamB/PxpA family. Forms a complex composed of PxpA, PxpB and PxpC.

The enzyme catalyses 5-oxo-L-proline + ATP + 2 H2O = L-glutamate + ADP + phosphate + H(+). Its function is as follows. Catalyzes the cleavage of 5-oxoproline to form L-glutamate coupled to the hydrolysis of ATP to ADP and inorganic phosphate. The polypeptide is 5-oxoprolinase subunit A 1 (Ralstonia nicotianae (strain ATCC BAA-1114 / GMI1000) (Ralstonia solanacearum)).